We begin with the raw amino-acid sequence, 191 residues long: Protein GrpE (191 aa).

Residues 1–22 (MKDKHNQEHDHLSQEEPESCEK) are disordered.

This sequence belongs to the GrpE family. Homodimer.

The protein resides in the cytoplasm. Its function is as follows. Participates actively in the response to hyperosmotic and heat shock by preventing the aggregation of stress-denatured proteins, in association with DnaK and GrpE. It is the nucleotide exchange factor for DnaK and may function as a thermosensor. Unfolded proteins bind initially to DnaJ; upon interaction with the DnaJ-bound protein, DnaK hydrolyzes its bound ATP, resulting in the formation of a stable complex. GrpE releases ADP from DnaK; ATP binding to DnaK triggers the release of the substrate protein, thus completing the reaction cycle. Several rounds of ATP-dependent interactions between DnaJ, DnaK and GrpE are required for fully efficient folding. This chain is Protein GrpE, found in Helicobacter pylori (strain Shi470).